A 330-amino-acid polypeptide reads, in one-letter code: Probable UDP-3-O-acylglucosamine N-acyltransferase 1, mitochondrial (330 aa).

Residues 1 to 52 (MANSLRTLFSVSTHGVFLNKRSSYRVRKVFVGMPLRICSEIPRFVSVSCIRS) constitute a mitochondrion transit peptide. 160–162 (FGF) contributes to the UDP-N-acetyl-alpha-D-glucosamine binding site. Residues aspartate 210 and glutamine 214 each contribute to the hexadecanoate site. Histidine 217 functions as the Proton acceptor in the catalytic mechanism. Asparagine 218, serine 236, and histidine 254 together coordinate UDP-N-acetyl-alpha-D-glucosamine.

Belongs to the transferase hexapeptide repeat family. LpxD subfamily. As to quaternary structure, homotrimer.

The protein resides in the mitochondrion. The catalysed reaction is a UDP-3-O-[(3R)-3-hydroxyacyl]-alpha-D-glucosamine + a (3R)-hydroxyacyl-[ACP] = a UDP-2-N,3-O-bis[(3R)-3-hydroxyacyl]-alpha-D-glucosamine + holo-[ACP] + H(+). It functions in the pathway glycolipid biosynthesis; lipid IV(A) biosynthesis; lipid IV(A) from (3R)-3-hydroxytetradecanoyl-[acyl-carrier-protein] and UDP-N-acetyl-alpha-D-glucosamine: step 3/6. In terms of biological role, involved in the biosynthesis of lipid A, a phosphorylated glycolipid that in bacteria anchors the lipopolysaccharide to the outer membrane of the cell. Lipid A-like molecules in plants may serve as structural components of the outer membranes of mitochondria and/or chloroplasts, or may be involved in signal transduction or plant defense responses. This Arabidopsis thaliana (Mouse-ear cress) protein is Probable UDP-3-O-acylglucosamine N-acyltransferase 1, mitochondrial (LPXD1).